Here is a 261-residue protein sequence, read N- to C-terminus: 3-methyl-2-oxobutanoate hydroxymethyltransferase (261 aa).

Mg(2+) is bound by residues aspartate 44 and aspartate 83. 3-methyl-2-oxobutanoate contacts are provided by residues 44–45 (DS), aspartate 83, and lysine 113. Glutamate 115 serves as a coordination point for Mg(2+). Residue glutamate 183 is the Proton acceptor of the active site.

Belongs to the PanB family. In terms of assembly, homodecamer; pentamer of dimers. Mg(2+) serves as cofactor.

It localises to the cytoplasm. It carries out the reaction 3-methyl-2-oxobutanoate + (6R)-5,10-methylene-5,6,7,8-tetrahydrofolate + H2O = 2-dehydropantoate + (6S)-5,6,7,8-tetrahydrofolate. Its pathway is cofactor biosynthesis; (R)-pantothenate biosynthesis; (R)-pantoate from 3-methyl-2-oxobutanoate: step 1/2. In terms of biological role, catalyzes the reversible reaction in which hydroxymethyl group from 5,10-methylenetetrahydrofolate is transferred onto alpha-ketoisovalerate to form ketopantoate. The polypeptide is 3-methyl-2-oxobutanoate hydroxymethyltransferase (Cyanothece sp. (strain PCC 7425 / ATCC 29141)).